Reading from the N-terminus, the 401-residue chain is UDP-N-acetylglucosamine--N-acetylmuramyl-(pentapeptide) pyrophosphoryl-undecaprenol N-acetylglucosamine transferase (401 aa).

The tract at residues 1 to 24 (MTRISVPAGQERNDGGISVPAGQE) is disordered. UDP-N-acetyl-alpha-D-glucosamine-binding positions include 39–41 (TAG), Asn157, Arg194, Ser228, and Gln324.

This sequence belongs to the glycosyltransferase 28 family. MurG subfamily.

It is found in the cell membrane. It carries out the reaction di-trans,octa-cis-undecaprenyl diphospho-N-acetyl-alpha-D-muramoyl-L-alanyl-D-glutamyl-meso-2,6-diaminopimeloyl-D-alanyl-D-alanine + UDP-N-acetyl-alpha-D-glucosamine = di-trans,octa-cis-undecaprenyl diphospho-[N-acetyl-alpha-D-glucosaminyl-(1-&gt;4)]-N-acetyl-alpha-D-muramoyl-L-alanyl-D-glutamyl-meso-2,6-diaminopimeloyl-D-alanyl-D-alanine + UDP + H(+). The protein operates within cell wall biogenesis; peptidoglycan biosynthesis. Cell wall formation. Catalyzes the transfer of a GlcNAc subunit on undecaprenyl-pyrophosphoryl-MurNAc-pentapeptide (lipid intermediate I) to form undecaprenyl-pyrophosphoryl-MurNAc-(pentapeptide)GlcNAc (lipid intermediate II). In Mycolicibacterium vanbaalenii (strain DSM 7251 / JCM 13017 / BCRC 16820 / KCTC 9966 / NRRL B-24157 / PYR-1) (Mycobacterium vanbaalenii), this protein is UDP-N-acetylglucosamine--N-acetylmuramyl-(pentapeptide) pyrophosphoryl-undecaprenol N-acetylglucosamine transferase.